We begin with the raw amino-acid sequence, 461 residues long: Probable carboxypeptidase MGYG_04702 (461 aa).

Positions M1–A20 are cleaved as a signal peptide. N-linked (GlcNAc...) asparagine glycans are attached at residues N48 and N99. D176 is a Zn(2+) binding site. E208 functions as the Proton acceptor in the catalytic mechanism. Residue E209 coordinates Zn(2+). N396 is a glycosylation site (N-linked (GlcNAc...) asparagine).

The protein belongs to the peptidase M20A family. It depends on Zn(2+) as a cofactor.

It is found in the secreted. The chain is Probable carboxypeptidase MGYG_04702 from Arthroderma gypseum (strain ATCC MYA-4604 / CBS 118893) (Microsporum gypseum).